A 305-amino-acid polypeptide reads, in one-letter code: tRNA dimethylallyltransferase 1 (305 aa).

Residue 10–17 coordinates ATP; that stretch reads GPTASGKS. Position 12–17 (12–17) interacts with substrate; that stretch reads TASGKS. Residues 35-38 form an interaction with substrate tRNA region; the sequence is DSLT.

This sequence belongs to the IPP transferase family. Monomer. Mg(2+) is required as a cofactor.

It carries out the reaction adenosine(37) in tRNA + dimethylallyl diphosphate = N(6)-dimethylallyladenosine(37) in tRNA + diphosphate. Functionally, catalyzes the transfer of a dimethylallyl group onto the adenine at position 37 in tRNAs that read codons beginning with uridine, leading to the formation of N6-(dimethylallyl)adenosine (i(6)A). This Trichlorobacter lovleyi (strain ATCC BAA-1151 / DSM 17278 / SZ) (Geobacter lovleyi) protein is tRNA dimethylallyltransferase 1.